We begin with the raw amino-acid sequence, 812 residues long: Toll-like receptor 10 (812 aa).

Residues 1-19 form the signal peptide; sequence MRYIRSIYIFCSIVTSVRS. The Extracellular portion of the chain corresponds to 20 to 577; sequence GASELPEERE…VHLPEISCNT (558 aa). LRR repeat units lie at residues 24 to 46, 49 to 70, 73 to 94, 97 to 118, and 119 to 139; these read LPEE…PEGL, ITTT…DFRS, KLKV…TFEF, ELSY…SLAG, and LRHL…VETG. N-linked (GlcNAc...) asparagine glycosylation is present at N33. N-linked (GlcNAc...) asparagine glycosylation is present at N140. Residues 143–166 form an LRR 6 repeat; it reads HLETLGLSGAKIQKSDFQKIAHLQ. Residue N189 is glycosylated (N-linked (GlcNAc...) asparagine). LRR repeat units follow at residues 296–321, 325–348, 350–373, and 374–395; these read SNTV…ESIY, TKMD…PMYP, RFQY…IQLP, and HLKT…SHFA. Residue N331 is glycosylated (N-linked (GlcNAc...) asparagine). N397 carries an N-linked (GlcNAc...) asparagine glycan. 5 LRR repeats span residues 399-420, 423-443, 445-467, 468-489, and 490-510; these read SLRH…NCLW, TLVT…GCLP, NIQI…THLT, SLRE…SHFR, and RLLV…DFFQ. N-linked (GlcNAc...) asparagine glycosylation is present at N428. Residues 523 to 577 enclose the LRRCT domain; the sequence is NPFRCTCELRDFIQLGKYSEGMMVGWSDSYICEYPLNLKGTQLKDVHLPEISCNT. The chain crosses the membrane as a helical span at residues 578–598; sequence GLLIVTIVVVMLVLGMAVAFC. Topologically, residues 599–812 are cytoplasmic; the sequence is CLHFDLPWYL…AISLIRTDCL (214 aa). One can recognise a TIR domain in the interval 633–776; that stretch reads VQFHVFISYS…LFWANLRAAL (144 aa).

Belongs to the Toll-like receptor family. Binds MYD88 via their respective TIR domains.

It is found in the membrane. Functionally, participates in the innate immune response to microbial agents. Acts via MYD88 and TRAF6, leading to NF-kappa-B activation, cytokine secretion and the inflammatory response. The chain is Toll-like receptor 10 (TLR10) from Bos taurus (Bovine).